Here is a 179-residue protein sequence, read N- to C-terminus: DELTA-miturgitoxin-Cp2a (179 aa).

The signal sequence occupies residues Met-1 to Ser-20. A propeptide spanning residues Glu-21 to Arg-47 is cleaved from the precursor. The Processing quadruplet motif motif lies at Glu-44 to Arg-47. Disulfide bonds link Cys-51-Cys-66, Cys-58-Cys-75, Cys-65-Cys-88, Cys-77-Cys-86, Cys-115-Cys-130, Cys-122-Cys-139, Cys-129-Cys-158, and Cys-141-Cys-156. Val-178 carries the valine amide modification.

Belongs to the spider toxin CSTX family. Double-CSTX subfamily. In terms of processing, cleavage of the propeptide depends on the processing quadruplet motif (XXXR, with at least one of X being E). As to expression, expressed by the venom gland.

It localises to the secreted. In terms of biological role, spider venom toxin that exhibits cytolytic activity by forming an alpha-helix across the membrane. Lethal to insect larvae. The sequence is that of DELTA-miturgitoxin-Cp2a from Cheiracanthium punctorium (Yellow sac spider).